Here is a 414-residue protein sequence, read N- to C-terminus: 2,3-diketo-5-methylthiopentyl-1-phosphate enolase (414 aa).

Lysine 99 acts as the Proton acceptor in catalysis. Substrate is bound by residues lysine 148, 174 to 177 (KDDE), histidine 265, glycine 338, and 360 to 361 (GG). 3 residues coordinate Mg(2+): lysine 174, aspartate 176, and glutamate 177. N6-carboxylysine is present on lysine 174.

The protein belongs to the RuBisCO large chain family. Type IV subfamily. Homodimer. Mg(2+) is required as a cofactor.

The enzyme catalyses 5-methylsulfanyl-2,3-dioxopentyl phosphate = 2-hydroxy-5-methylsulfanyl-3-oxopent-1-enyl phosphate. It participates in amino-acid biosynthesis; L-methionine biosynthesis via salvage pathway; L-methionine from S-methyl-5-thio-alpha-D-ribose 1-phosphate: step 3/6. Catalyzes the enolization of 2,3-diketo-5-methylthiopentyl-1-phosphate (DK-MTP-1-P) into 2-hydroxy-3-keto-5-methylthiopentenyl-1-phosphate (HK-MTPenyl-1-P). This is 2,3-diketo-5-methylthiopentyl-1-phosphate enolase from Bacillus cereus (strain ATCC 14579 / DSM 31 / CCUG 7414 / JCM 2152 / NBRC 15305 / NCIMB 9373 / NCTC 2599 / NRRL B-3711).